We begin with the raw amino-acid sequence, 354 residues long: Membrane progestin receptor beta (354 aa).

Over 1 to 75 (MTTAILERLS…FFSLFQKHNE (75 aa)) the chain is Cytoplasmic. A helical transmembrane segment spans residues 76-96 (VVNVWTHLLAALAVLLRFWAF). Over 97 to 111 (AEAEALPWASTHSLP) the chain is Extracellular. A helical membrane pass occupies residues 112-132 (LLLFILSSITYLTCSLLAHLL). Residues 133–174 (QSKSELSHYTFYFVDYVGVSVYQYGSALAHFFYSSDQAWYDR) lie on the Cytoplasmic side of the membrane. The chain crosses the membrane as a helical span at residues 175–195 (FWLFFLPAAAFCGWLSCAGCC). Topologically, residues 196 to 213 (YAKYRYRRPYPVMRKICQ) are extracellular. Residues 214-234 (VVPAGLAFILDISPVAHRVAL) traverse the membrane as a helical segment. Residues 235-243 (CHLAGCQEQ) lie on the Cytoplasmic side of the membrane. Residues 244-264 (AAWYHTLQILFFLVSAYFFSC) form a helical membrane-spanning segment. The Extracellular portion of the chain corresponds to 265–283 (PVPEKYFPGSCDIVGHGHQ). Residues 284–304 (IFHAFLSICTLSQLEAILLDY) traverse the membrane as a helical segment. Topologically, residues 305–319 (QGRQEIFLQRHGPLS) are cytoplasmic. The helical transmembrane segment at 320–340 (VHMACLSFFFLAACSAATAAL) threads the bilayer. Residues 341 to 354 (LRHKVKARLTKKDS) are Extracellular-facing.

This sequence belongs to the ADIPOR family. Highly expressed in the hypothalamus. Also expressed in spinal cord, kidney and testis.

Its subcellular location is the cell membrane. In terms of biological role, plasma membrane progesterone (P4) receptor coupled to G proteins. Seems to act through a G(i) mediated pathway. May be involved in oocyte maturation. Also binds dehydroepiandrosterone (DHEA), pregnanolone, pregnenolone and allopregnanolone. The polypeptide is Membrane progestin receptor beta (Homo sapiens (Human)).